A 164-amino-acid chain; its full sequence is ATP synthase subunit b (164 aa).

A helical transmembrane segment spans residues 4–24; the sequence is LGINPTLFIAQLINFLLLIFI.

This sequence belongs to the ATPase B chain family. F-type ATPases have 2 components, F(1) - the catalytic core - and F(0) - the membrane proton channel. F(1) has five subunits: alpha(3), beta(3), gamma(1), delta(1), epsilon(1). F(0) has four main subunits: a(1), b(2) and c(10-14). The alpha and beta chains form an alternating ring which encloses part of the gamma chain. F(1) is attached to F(0) by a central stalk formed by the gamma and epsilon chains, while a peripheral stalk is formed by the delta and b chains.

The protein resides in the cell membrane. Functionally, f(1)F(0) ATP synthase produces ATP from ADP in the presence of a proton or sodium gradient. F-type ATPases consist of two structural domains, F(1) containing the extramembraneous catalytic core and F(0) containing the membrane proton channel, linked together by a central stalk and a peripheral stalk. During catalysis, ATP synthesis in the catalytic domain of F(1) is coupled via a rotary mechanism of the central stalk subunits to proton translocation. Its function is as follows. Component of the F(0) channel, it forms part of the peripheral stalk, linking F(1) to F(0). This chain is ATP synthase subunit b, found in Chloroflexus aurantiacus (strain ATCC 29366 / DSM 635 / J-10-fl).